We begin with the raw amino-acid sequence, 865 residues long: Fatty acyl-CoA synthetase and RNA processing-associated kinase 1 (865 aa).

The 273-residue stretch at 41-313 folds into the Protein kinase domain; that stretch reads YILGSTLGEG…LKQIKKHEWL (273 aa). ATP-binding positions include 47–55 and K80; that span reads LGEGEFGKV. D175 (proton acceptor) is an active-site residue. The interval 341-398 is disordered; that stretch reads KPRRRYGSRPQSSCSTSSLGSRSDKRDSLVIDSTLITFPAPPQESQNHIITRPASIAS. A compositionally biased stretch (low complexity) spans 352-361; sequence SSCSTSSLGS. S441 bears the Phosphoserine mark. 3 disordered regions span residues 480–554, 673–733, and 754–782; these read ISGS…YTTP, TEES…LNEA, and SLYSSMDSKRKPSPPSQRRPKKDDSYQTN. A compositionally biased stretch (polar residues) spans 494 to 538; that stretch reads STTMQTSKIQPNNMASSQNHQYNKNKTQNSLQSAKNFYRTSSSSH. Composition is skewed to basic and acidic residues over residues 690–708 and 724–733; these read EGQESIDKAKTEDTSEKGS and NHLERSLNEA.

It belongs to the protein kinase superfamily. Ser/Thr protein kinase family. In terms of assembly, interacts with FAA3, POL5 and TPA1.

The protein resides in the cytoplasm. It catalyses the reaction L-seryl-[protein] + ATP = O-phospho-L-seryl-[protein] + ADP + H(+). The enzyme catalyses L-threonyl-[protein] + ATP = O-phospho-L-threonyl-[protein] + ADP + H(+). In terms of biological role, putative serine/threonine-protein kinase that may be involved in rRNA transcription and ribosome biogenesis. The protein is Fatty acyl-CoA synthetase and RNA processing-associated kinase 1 (FRK1) of Saccharomyces cerevisiae (strain ATCC 204508 / S288c) (Baker's yeast).